The sequence spans 105 residues: V-type ATP synthase subunit F (105 aa).

This sequence belongs to the V-ATPase F subunit family.

Produces ATP from ADP in the presence of a proton gradient across the membrane. This Clostridium perfringens (strain 13 / Type A) protein is V-type ATP synthase subunit F.